Reading from the N-terminus, the 547-residue chain is Solute carrier family 22 member 25 (547 aa).

The Cytoplasmic portion of the chain corresponds to 1–9 (MAFQDLLDQ). Residues 10 to 30 (VGGLGRFQILQMVFLIMFNVI) traverse the membrane as a helical segment. The Extracellular segment spans residues 31-145 (VYHQTQLENF…DLVCESQPLN (115 aa)). Asn56 and Asn102 each carry an N-linked (GlcNAc...) asparagine glycan. The helical transmembrane segment at 146–166 (SVAKFLFMAGMMVGGNLYGHL) threads the bilayer. The Cytoplasmic portion of the chain corresponds to 167-177 (SDRFGRKFVLR). Residues 178-198 (WSYLQLAIVGTCAAFAPTILV) form a helical membrane-spanning segment. The Extracellular segment spans residues 199 to 204 (YCSLRF). Residues 205 to 225 (LAGAATFSIIVNTVLLIVEWI) form a helical membrane-spanning segment. At 226-234 (THQFCAMAL) the chain is on the cytoplasmic side. A helical membrane pass occupies residues 235–255 (TLTLCAASIGHITLGSLAFVI). Topologically, residues 256 to 259 (RDQC) are extracellular. A helical transmembrane segment spans residues 260–280 (ILQLVMSAPCFVFFLFSRWLA). At 281-349 (ESARWLIINN…LLRIPNICKR (69 aa)) the chain is on the cytoplasmic side. The helical transmembrane segment at 350 to 370 (ICFLSFVRFASTIPFWGLTLH) threads the bilayer. The Extracellular portion of the chain corresponds to 371–377 (LQHLGNN). Residues 378 to 398 (VFLLQTLFGAVTLLANCVAPW) traverse the membrane as a helical segment. Residues 399–406 (ALNHMSRR) lie on the Cytoplasmic side of the membrane. The helical transmembrane segment at 407 to 427 (LSQMLLMFLLATCLLAIIFVP) threads the bilayer. The Extracellular segment spans residues 428-434 (QEMQTLR). The helical transmembrane segment at 435–455 (VVLATLGVGAASLGITCSTAQ) threads the bilayer. Residues 456 to 470 (ENELIPSIIRGRATG) are Cytoplasmic-facing. A helical transmembrane segment spans residues 471–491 (ITGNFANIGGALASLMMILSI). Over 492–494 (YSR) the chain is Extracellular. A helical transmembrane segment spans residues 495–515 (PLPWIIYGVFAILSGLVVLLL). Topologically, residues 516-547 (PETRNQPLLDSIQDVENEGVNSLAAPQRSSVL) are cytoplasmic.

Belongs to the major facilitator (TC 2.A.1) superfamily. Organic cation transporter (TC 2.A.1.19) family. Expressed exclusively in liver in both embryo and adult.

Its subcellular location is the membrane. The chain is Solute carrier family 22 member 25 from Homo sapiens (Human).